Reading from the N-terminus, the 931-residue chain is MSHPKLESSSNKEIITEEVGLLKQLLDEATQKLIGSESFDKIEKIVSLSLTDDYTGLKETISALSNEEMVIVSRYFSILPLLINISEDVDLAYEINYKNNLNQDYLGKLSTTIDVVAGHENAKDILEHVNVVPVLTAHPTQVQRKTVLELTSKIHDLLRKYRDVKAGIVNQEKWYADLRRYIGIIMQTDTIREKKLKVKNEITNVMEYYNRSLIKAVTKLTAEYKALAAKKGIHLENPKPLTMGMWIGGDRDGNPFVTAETLRLSAMVQSEVIINHYIEQLNELYRNMSLSINLTEVSPELVTLANQSQDNSVYRENEPYRKAFNFIQDKLVQTLLNLKVGSSPKEKFVSRQESSDIVGRYIKSHIAQVASDIQTEELPAYATAEEFKQDLLLVKQSLVQYGQDSLVDGELACLIQAVDIFGFYLATIDMRQDSSINEACVAELLKSANIVDDYSSLSEEEKCQLLLKELTEDPRTLSSTHAPKSELLQKELAIFQTARELKDQLGEDIINQHIISHTESVSDMFELAIMLKEVGLIDANQARIQIVPLFETIEDLDNSRDIMTQYLHYELVKKWIATNNNYQEIMLGYSDSNKDGGYLSSGWTLYKAQNELTKIGEENGIKITFFHGRGGTVGRGGGPSYEAITSQPFGSIKDRIRLTEQGEIIENKYGNQDAAYYNLEMLISASIDRMVTRMITNPNEIDNFRETMDGIVSESNAVYRNLVFDNPYFYDYFFEASPIKEVSSLNIGSRPAARKTITEISGLRAIPWVFSWSQNRIMFPGWYGVGSAFKHFIEQDEANLAKLQTMYQKWPFFNSLLSNVDMVLSKSNMNIALQYAQLAGSKEVRDVFNIILNEWQLTKDMILAIEQHDNLLEENPMLHASLDYRLPYFNVLNYVQIELIKRLRSNQLDEDYEKLIHITINGIATGLRNSG.

Catalysis depends on residues His138 and Lys594.

It belongs to the PEPCase type 1 family. Mg(2+) serves as cofactor.

It carries out the reaction oxaloacetate + phosphate = phosphoenolpyruvate + hydrogencarbonate. Forms oxaloacetate, a four-carbon dicarboxylic acid source for the tricarboxylic acid cycle. This chain is Phosphoenolpyruvate carboxylase, found in Streptococcus agalactiae serotype III (strain NEM316).